Here is a 455-residue protein sequence, read N- to C-terminus: Bifunctional protein GlmU (455 aa).

The segment at 1–226 (MSLEIVILAA…AMEVQGANDR (226 aa)) is pyrophosphorylase. UDP-N-acetyl-alpha-D-glucosamine contacts are provided by residues 8–11 (LAAG), lysine 22, glutamine 73, 78–79 (GT), 99–101 (YGD), glycine 136, glutamate 151, asparagine 166, and asparagine 224. Residue aspartate 101 coordinates Mg(2+). Residue asparagine 224 participates in Mg(2+) binding. The interval 227–247 (KQLAELERHYQLRAGRRLMAQ) is linker. Positions 248 to 455 (GVTLRDPARF…WKRPEKIKKD (208 aa)) are N-acetyltransferase. Residues arginine 330 and lysine 348 each contribute to the UDP-N-acetyl-alpha-D-glucosamine site. Residue histidine 360 is the Proton acceptor of the active site. Positions 363 and 374 each coordinate UDP-N-acetyl-alpha-D-glucosamine. Acetyl-CoA is bound by residues alanine 377, 383-384 (NY), serine 402, alanine 420, and arginine 437.

This sequence in the N-terminal section; belongs to the N-acetylglucosamine-1-phosphate uridyltransferase family. The protein in the C-terminal section; belongs to the transferase hexapeptide repeat family. As to quaternary structure, homotrimer. Mg(2+) serves as cofactor.

It is found in the cytoplasm. It catalyses the reaction alpha-D-glucosamine 1-phosphate + acetyl-CoA = N-acetyl-alpha-D-glucosamine 1-phosphate + CoA + H(+). It carries out the reaction N-acetyl-alpha-D-glucosamine 1-phosphate + UTP + H(+) = UDP-N-acetyl-alpha-D-glucosamine + diphosphate. It participates in nucleotide-sugar biosynthesis; UDP-N-acetyl-alpha-D-glucosamine biosynthesis; N-acetyl-alpha-D-glucosamine 1-phosphate from alpha-D-glucosamine 6-phosphate (route II): step 2/2. The protein operates within nucleotide-sugar biosynthesis; UDP-N-acetyl-alpha-D-glucosamine biosynthesis; UDP-N-acetyl-alpha-D-glucosamine from N-acetyl-alpha-D-glucosamine 1-phosphate: step 1/1. Its pathway is bacterial outer membrane biogenesis; LPS lipid A biosynthesis. In terms of biological role, catalyzes the last two sequential reactions in the de novo biosynthetic pathway for UDP-N-acetylglucosamine (UDP-GlcNAc). The C-terminal domain catalyzes the transfer of acetyl group from acetyl coenzyme A to glucosamine-1-phosphate (GlcN-1-P) to produce N-acetylglucosamine-1-phosphate (GlcNAc-1-P), which is converted into UDP-GlcNAc by the transfer of uridine 5-monophosphate (from uridine 5-triphosphate), a reaction catalyzed by the N-terminal domain. The protein is Bifunctional protein GlmU of Pseudomonas fluorescens (strain ATCC BAA-477 / NRRL B-23932 / Pf-5).